The chain runs to 347 residues: GMP reductase (347 aa).

Ala-108–Ala-131 serves as a coordination point for NADP(+). K(+)-binding residues include Gly-181 and Gly-183. Cys-186 functions as the Thioimidate intermediate in the catalytic mechanism. Ile-216–Val-239 serves as a coordination point for NADP(+).

This sequence belongs to the IMPDH/GMPR family. GuaC type 1 subfamily. As to quaternary structure, homotetramer.

It carries out the reaction IMP + NH4(+) + NADP(+) = GMP + NADPH + 2 H(+). Catalyzes the irreversible NADPH-dependent deamination of GMP to IMP. It functions in the conversion of nucleobase, nucleoside and nucleotide derivatives of G to A nucleotides, and in maintaining the intracellular balance of A and G nucleotides. This chain is GMP reductase, found in Escherichia coli O127:H6 (strain E2348/69 / EPEC).